Consider the following 102-residue polypeptide: uncharacterized protein (102 aa).

The tract at residues 77 to 102 is disordered; the sequence is RKDGDEKSKPNSKDYASRPIRDHSKI.

This is an uncharacterized protein from Microplitis demolitor (Parasitoid wasp).